The following is a 63-amino-acid chain: UPF0337 protein SERP0494 (63 aa).

Residues 1-46 are disordered; sequence MAEDKFEQAKGNIKETVGNATDNKELEKDGKGDKASGKAKEAVENV. The span at 22–46 shows a compositional bias: basic and acidic residues; it reads DNKELEKDGKGDKASGKAKEAVENV.

The protein belongs to the UPF0337 (CsbD) family.

The chain is UPF0337 protein SERP0494 from Staphylococcus epidermidis (strain ATCC 35984 / DSM 28319 / BCRC 17069 / CCUG 31568 / BM 3577 / RP62A).